The sequence spans 747 residues: Protein FAM83C (747 aa).

Positions 1–309 (MFGGPGPGVL…LYAESQPVEG (309 aa)) are DUF1669. 7 disordered regions span residues 322–352 (LRPP…SSIK), 374–412 (TGVV…LYRA), 462–484 (LSRF…GRWV), 517–550 (AREV…SPSQ), 588–633 (NQSR…LGHS), 646–672 (GEGP…DEKR), and 692–715 (ARQG…DLVR). A compositionally biased stretch (low complexity) spans 328-350 (ALAFRPDVPSPTSSLPSSTSLSS). The segment covering 390–402 (GQPSLHRQLSDPN) has biased composition (polar residues). A compositionally biased stretch (gly residues) spans 697-707 (EPGGPKGGHLN).

The protein belongs to the FAM83 family. In terms of assembly, may interact with RAF1. Post-translationally, phosphorylated in vitro by CSNK1A1.

Its subcellular location is the cytoplasm. Functionally, may play a role in MAPK signaling. In Homo sapiens (Human), this protein is Protein FAM83C.